A 186-amino-acid polypeptide reads, in one-letter code: Myosin light chain 1, skeletal muscle isoform (186 aa).

At methionine 1 the chain carries Blocked amino end (Met). Residues methionine 1–alanine 26 form a disordered region. Over residues alanine 12 to alanine 26 the composition is skewed to pro residues. EF-hand domains follow at residues aspartate 42–asparagine 77 and alanine 119–lysine 154.

As to quaternary structure, myosin is a hexamer of 2 heavy chains and 4 light chains.

The sequence is that of Myosin light chain 1, skeletal muscle isoform from Chelon ramada (Thin-lipped grey mullet).